Here is a 524-residue protein sequence, read N- to C-terminus: Serine/threonine-protein kinase PAK 2 (524 aa).

Positions 1 to 81 are disordered; sequence MSDNGELEDK…PEISPPSDFE (81 aa). Ser-2 is modified (N-acetylserine). Residues Ser-2, Ser-20, Ser-55, Ser-58, and Ser-59 each carry the phosphoserine modification. Phosphothreonine is present on Thr-60. Lys-62 carries the post-translational modification N6-acetyllysine. At Ser-64 the chain carries Phosphoserine. Residues 67-81 show a composition bias toward basic and acidic residues; that stretch reads KEKERPEISPPSDFE. A GTPase-binding region spans residues 69-112; it reads KERPEISPPSDFEHTIHVGFDAVTGEFTGMPEQWARLLQTSNIT. Positions 69–137 are autoregulatory region; that stretch reads KERPEISPPS…KFYDSNTVKQ (69 aa). Residues 74–87 form the CRIB domain; sequence ISPPSDFEHTIHVG. The segment at 88-248 is linker; the sequence is FDAVTGEFTG…IVSIGDPKKK (161 aa). The residue at position 128 (Lys-128) is an N6-acetyllysine. Thr-134 carries the phosphothreonine modification. Tyr-139 bears the Phosphotyrosine mark. At Ser-141 the chain carries Phosphoserine. The segment at 142–190 is disordered; the sequence is FTPPEKDGFPSGTPALNTKGSETSAVVTEEDDDDEDAAPPVIAPRPDHT. Residue Thr-143 is modified to Phosphothreonine. The residue at position 152 (Ser-152) is a Phosphoserine. Thr-154, Thr-159, and Thr-169 each carry phosphothreonine. Residues 155–167 show a composition bias toward polar residues; the sequence is PALNTKGSETSAV. Residues 169 to 178 show a composition bias toward acidic residues; the sequence is TEEDDDDEDA. A Phosphoserine modification is found at Ser-197. A disordered region spans residues 204 to 228; that stretch reads APVGDSNVDSGAKSSDKQKKKAKMT. Residues 245–251 carry the Nuclear localization signal motif; the sequence is PKKKYTR. A Protein kinase domain is found at 249–500; it reads YTRYEKIGQG…AKELLQHPFL (252 aa). ATP contacts are provided by residues 255–263 and Lys-278; that span reads IGQGASGTV. Asp-368 acts as the Proton acceptor in catalysis. Position 402 is a phosphothreonine; by autocatalysis (Thr-402).

This sequence belongs to the protein kinase superfamily. STE Ser/Thr protein kinase family. STE20 subfamily. Interacts tightly with GTP-bound but not GDP-bound CDC42/p21 and RAC1. Interacts with SH3MD4. Interacts with SCRIB. Interacts with ARHGEF7 and GIT1. PAK-2p34 interacts with ARHGAP10. Interacts with RAC1. Full-length PAK2 is autophosphorylated when activated by CDC42/p21. Following cleavage, both peptides, PAK-2p27 and PAK-2p34, become highly autophosphorylated. Autophosphorylation of PAK-2p27 can occur in the absence of any effectors and is dependent on phosphorylation of Thr-402, because PAK-2p27 is acting as an exogenous substrate. In terms of processing, during apoptosis proteolytically cleaved by caspase-3 or caspase-3-like proteases to yield active PAK-2p34. Post-translationally, ubiquitinated, leading to its proteasomal degradation.

It is found in the cytoplasm. The protein resides in the nucleus. Its subcellular location is the perinuclear region. The protein localises to the membrane. The enzyme catalyses L-seryl-[protein] + ATP = O-phospho-L-seryl-[protein] + ADP + H(+). The catalysed reaction is L-threonyl-[protein] + ATP = O-phospho-L-threonyl-[protein] + ADP + H(+). Its activity is regulated as follows. Activated by binding small G proteins. Binding of GTP-bound CDC42 or RAC1 to the autoregulatory region releases monomers from the autoinhibited dimer, enables phosphorylation of Thr-402 and allows the kinase domain to adopt an active structure. Following caspase cleavage, autophosphorylated PAK-2p34 is constitutively active. Its function is as follows. Serine/threonine protein kinase that plays a role in a variety of different signaling pathways including cytoskeleton regulation, cell motility, cell cycle progression, apoptosis or proliferation. Acts as a downstream effector of the small GTPases CDC42 and RAC1. Activation by the binding of active CDC42 and RAC1 results in a conformational change and a subsequent autophosphorylation on several serine and/or threonine residues. Full-length PAK2 stimulates cell survival and cell growth. Phosphorylates MAPK4 and MAPK6 and activates the downstream target MAPKAPK5, a regulator of F-actin polymerization and cell migration. Phosphorylates JUN and plays an important role in EGF-induced cell proliferation. Phosphorylates many other substrates including histone H4 to promote assembly of H3.3 and H4 into nucleosomes, BAD, ribosomal protein S6, or MBP. Phosphorylates CASP7, thereby preventing its activity. Additionally, associates with ARHGEF7 and GIT1 to perform kinase-independent functions such as spindle orientation control during mitosis. On the other hand, apoptotic stimuli such as DNA damage lead to caspase-mediated cleavage of PAK2, generating PAK-2p34, an active p34 fragment that translocates to the nucleus and promotes cellular apoptosis involving the JNK signaling pathway. Caspase-activated PAK2 phosphorylates MKNK1 and reduces cellular translation. The sequence is that of Serine/threonine-protein kinase PAK 2 (Pak2) from Rattus norvegicus (Rat).